The primary structure comprises 337 residues: tRNA N6-adenosine threonylcarbamoyltransferase (337 aa).

Fe cation is bound by residues histidine 111 and histidine 115. Substrate contacts are provided by residues 134–138 (LVSGG), aspartate 167, glycine 180, and asparagine 272. Position 300 (aspartate 300) interacts with Fe cation.

Belongs to the KAE1 / TsaD family. Fe(2+) serves as cofactor.

It is found in the cytoplasm. The catalysed reaction is L-threonylcarbamoyladenylate + adenosine(37) in tRNA = N(6)-L-threonylcarbamoyladenosine(37) in tRNA + AMP + H(+). Its function is as follows. Required for the formation of a threonylcarbamoyl group on adenosine at position 37 (t(6)A37) in tRNAs that read codons beginning with adenine. Is involved in the transfer of the threonylcarbamoyl moiety of threonylcarbamoyl-AMP (TC-AMP) to the N6 group of A37, together with TsaE and TsaB. TsaD likely plays a direct catalytic role in this reaction. This Methylococcus capsulatus (strain ATCC 33009 / NCIMB 11132 / Bath) protein is tRNA N6-adenosine threonylcarbamoyltransferase.